The sequence spans 173 residues: Large ribosomal subunit protein uL10 (173 aa).

The protein belongs to the universal ribosomal protein uL10 family. Part of the ribosomal stalk of the 50S ribosomal subunit. The N-terminus interacts with L11 and the large rRNA to form the base of the stalk. The C-terminus forms an elongated spine to which L12 dimers bind in a sequential fashion forming a multimeric L10(L12)X complex.

Its function is as follows. Forms part of the ribosomal stalk, playing a central role in the interaction of the ribosome with GTP-bound translation factors. This chain is Large ribosomal subunit protein uL10, found in Acidithiobacillus ferrooxidans (strain ATCC 23270 / DSM 14882 / CIP 104768 / NCIMB 8455) (Ferrobacillus ferrooxidans (strain ATCC 23270)).